Consider the following 284-residue polypeptide: Acetylglutamate kinase (284 aa).

Residues 64–65 (GG), R86, and N177 each bind substrate.

This sequence belongs to the acetylglutamate kinase family. ArgB subfamily.

It localises to the cytoplasm. The enzyme catalyses N-acetyl-L-glutamate + ATP = N-acetyl-L-glutamyl 5-phosphate + ADP. Its pathway is amino-acid biosynthesis; L-arginine biosynthesis; N(2)-acetyl-L-ornithine from L-glutamate: step 2/4. In terms of biological role, catalyzes the ATP-dependent phosphorylation of N-acetyl-L-glutamate. The polypeptide is Acetylglutamate kinase (Haemophilus ducreyi (strain 35000HP / ATCC 700724)).